Here is a 284-residue protein sequence, read N- to C-terminus: Bifunctional protein FolD (284 aa).

166–168 (GAS) provides a ligand contact to NADP(+).

This sequence belongs to the tetrahydrofolate dehydrogenase/cyclohydrolase family. Homodimer.

The catalysed reaction is (6R)-5,10-methylene-5,6,7,8-tetrahydrofolate + NADP(+) = (6R)-5,10-methenyltetrahydrofolate + NADPH. It carries out the reaction (6R)-5,10-methenyltetrahydrofolate + H2O = (6R)-10-formyltetrahydrofolate + H(+). It functions in the pathway one-carbon metabolism; tetrahydrofolate interconversion. Functionally, catalyzes the oxidation of 5,10-methylenetetrahydrofolate to 5,10-methenyltetrahydrofolate and then the hydrolysis of 5,10-methenyltetrahydrofolate to 10-formyltetrahydrofolate. This is Bifunctional protein FolD from Nitrosococcus oceani (strain ATCC 19707 / BCRC 17464 / JCM 30415 / NCIMB 11848 / C-107).